The following is a 397-amino-acid chain: MTTLLNPYFGEFGGMYVPQILMPALNQLEEAFVSAQKDPEFQAQFADLLKNYAGRPTALTKCQNITAGTRTTLYLKREDLLHGGAHKTNQVLGQALLAKRMGKSEIIAETGAGQHGVASALASALLGLKCRIYMGAKDVERQSPNVFRMRLMGAEVIPVHSGSATLKDACNEALRDWSGSYETAHYMLGTAAGPHPYPTIVREFQRMIGEETKAQILDKEGRLPDAVIACVGGGSNAIGMFADFINDTSVGLIGVEPGGHGIETGEHGAPLKHGRVGIYFGMKAPMMQTADGQIEESYSISAGLDFPSVGPQHAYLNSIGRADYVSITDDEALEAFKTLCRHEGIIPALESSHALAHALKMMREQPEKEQLLVVNLSGRGDKDIFTVHDILKARGEI.

Position 87 is an N6-(pyridoxal phosphate)lysine (lysine 87).

It belongs to the TrpB family. As to quaternary structure, tetramer of two alpha and two beta chains. Requires pyridoxal 5'-phosphate as cofactor.

It carries out the reaction (1S,2R)-1-C-(indol-3-yl)glycerol 3-phosphate + L-serine = D-glyceraldehyde 3-phosphate + L-tryptophan + H2O. Its pathway is amino-acid biosynthesis; L-tryptophan biosynthesis; L-tryptophan from chorismate: step 5/5. Functionally, the beta subunit is responsible for the synthesis of L-tryptophan from indole and L-serine. This chain is Tryptophan synthase beta chain, found in Salmonella agona (strain SL483).